We begin with the raw amino-acid sequence, 333 residues long: Flotillin-like protein FloA (333 aa).

A helical membrane pass occupies residues 9–29 (IVLIVGGIIFLILFFHYVPFF).

This sequence belongs to the flotillin-like FloA family. As to quaternary structure, homooligomerizes.

It is found in the cell membrane. It localises to the membrane raft. Its function is as follows. Found in functional membrane microdomains (FMM) that may be equivalent to eukaryotic membrane rafts. FMMs are highly dynamic and increase in number as cells age. Flotillins are thought to be important factors in membrane fluidity. This Bacteroides thetaiotaomicron (strain ATCC 29148 / DSM 2079 / JCM 5827 / CCUG 10774 / NCTC 10582 / VPI-5482 / E50) protein is Flotillin-like protein FloA.